Reading from the N-terminus, the 946-residue chain is Bifunctional glutamine synthetase adenylyltransferase/adenylyl-removing enzyme (946 aa).

Positions 1–440 (MKPLSSPLQQ…VFNELIGDDE (440 aa)) are adenylyl removase. The adenylyl transferase stretch occupies residues 449–946 (SEQWRELWQD…ASWQKWLVEE (498 aa)).

The protein belongs to the GlnE family. Mg(2+) is required as a cofactor.

It carries out the reaction [glutamine synthetase]-O(4)-(5'-adenylyl)-L-tyrosine + phosphate = [glutamine synthetase]-L-tyrosine + ADP. The enzyme catalyses [glutamine synthetase]-L-tyrosine + ATP = [glutamine synthetase]-O(4)-(5'-adenylyl)-L-tyrosine + diphosphate. Involved in the regulation of glutamine synthetase GlnA, a key enzyme in the process to assimilate ammonia. When cellular nitrogen levels are high, the C-terminal adenylyl transferase (AT) inactivates GlnA by covalent transfer of an adenylyl group from ATP to specific tyrosine residue of GlnA, thus reducing its activity. Conversely, when nitrogen levels are low, the N-terminal adenylyl removase (AR) activates GlnA by removing the adenylyl group by phosphorolysis, increasing its activity. The regulatory region of GlnE binds the signal transduction protein PII (GlnB) which indicates the nitrogen status of the cell. This Shigella flexneri protein is Bifunctional glutamine synthetase adenylyltransferase/adenylyl-removing enzyme.